A 349-amino-acid chain; its full sequence is Secondary metabolism regulator LAE1 (349 aa).

A disordered region spans residues Met1 to Glu46. A compositionally biased stretch (polar residues) spans Asn25–Ala38.

Belongs to the methyltransferase superfamily. LaeA methyltransferase family. Component of the heterotrimeric velvet complex composed of LAE1, VEL1 and VEL2; VEL1 acting as a bridging protein between LAE1 and VEL2.

Its subcellular location is the nucleus. It catalyses the reaction L-methionyl-[protein] + S-adenosyl-L-methionine = S-methyl-L-methionyl-[protein] + S-adenosyl-L-homocysteine. Methyltransferase that performs automethylation. No other methyl-accepting substrate has been identified yet. Component of the velvet transcription factor complex that acts as a global regulator for secondary metabolite gene expression. Controls the expression of the gamma-pentyl-pyrone gene clusters. Required for the expression of cellulase. Regulates asexual sporulation (conidiation) by environmental stimuli such as light and/or mechanical injury. Required for oxidative stress tolerance. Also plays a role in defense and parasitism on other fungi. The polypeptide is Secondary metabolism regulator LAE1 (Hypocrea atroviridis (strain ATCC 20476 / IMI 206040) (Trichoderma atroviride)).